Consider the following 212-residue polypeptide: MESTEKLTDTNAILAYLYETFPLCFIAEGETKPLKIGLFQDLAERLADDSKVSKTQLRIALRRYTSSWRYLKCVKAGAQRIDLDGNACGELEQEHIDHAAATLKESQDKAKAKRVAQAKSANPAAKTAKKPVKKPVAKRPKPAQSSKPAKEPVVAENLTPAVLTELKPNQRVNVKLGKAPVAGVILDIKKEDVQVQLDSGLTIKVRAEHILL.

Positions 107-153 (QDKAKAKRVAQAKSANPAAKTAKKPVKKPVAKRPKPAQSSKPAKEPV) are disordered. Residues 117–126 (QAKSANPAAK) show a composition bias toward low complexity. Residues 127–141 (TAKKPVKKPVAKRPK) show a composition bias toward basic residues.

This sequence belongs to the ProQ family.

The protein resides in the cytoplasm. RNA chaperone with significant RNA binding, RNA strand exchange and RNA duplexing activities. The sequence is that of RNA chaperone ProQ from Shewanella pealeana (strain ATCC 700345 / ANG-SQ1).